The sequence spans 1085 residues: Error-prone DNA polymerase (1085 aa).

This sequence belongs to the DNA polymerase type-C family. DnaE2 subfamily.

It is found in the cytoplasm. The catalysed reaction is DNA(n) + a 2'-deoxyribonucleoside 5'-triphosphate = DNA(n+1) + diphosphate. In terms of biological role, DNA polymerase involved in damage-induced mutagenesis and translesion synthesis (TLS). It is not the major replicative DNA polymerase. The sequence is that of Error-prone DNA polymerase from Symbiobacterium thermophilum (strain DSM 24528 / JCM 14929 / IAM 14863 / T).